A 553-amino-acid chain; its full sequence is Muellerian-inhibiting factor (553 aa).

A signal peptide spans 1 to 22 (MQGPHLSLLLLLLATMGAVLQA). Positions 23-445 (DTVEELTNTR…GREGRGRAGR (423 aa)) are excised as a propeptide. Asn325 and Asn409 each carry an N-linked (GlcNAc...) asparagine glycan. Intrachain disulfides connect Cys455–Cys519, Cys481–Cys550, and Cys485–Cys552.

This sequence belongs to the TGF-beta family. As to quaternary structure, homodimer; disulfide-linked. Preproprotein is proteolytically processed to generate N- and C-terminal cleavage products that homodimerize and associate to form a biologically active non-covalent complex. Binding of the non-covalent complex to AMHR2 induces dissociation of the pro-region from the mature C-terminal dimer. The N-terminal portion of the protein, despite having no intrinsic activity, has the role of amplifying the activity of the C-terminus. As to expression, mainly expressed in granulosa cells from preantral and small antral follicles.

It is found in the secreted. In terms of biological role, plays an important role in several reproductive functions. Induces Muellerian duct regression during male fetal sexual differentiation and plays a role in Leydig cell differentiation and function. In female acts as a negative regulator of the primordial to primary follicle transition and decreases FSH sensitivity of growing follicles. AMH signals by binding to a specific type-II receptor, AMHR2, that heterodimerizes with type-I receptors (ACVR1 and BMPR1A), and recruiting SMAD proteins that are translocated to the nucleus to regulate target gene expression. The sequence is that of Muellerian-inhibiting factor (Amh) from Rattus norvegicus (Rat).